Consider the following 134-residue polypeptide: MNNLEKYRPYFLAFLRIVVAYMFILHGTAKFLEFPISMTGGNGAVGDPMLLVAGVIEIVGSILLILGLFTRQAAFILSVEMAYAYFFLHVAGKGNLFFPIANGGELALLYSLLFLYFVFSGAGACALDNKFFKK.

Transmembrane regions (helical) follow at residues 9–29 (PYFL…HGTA), 49–69 (MLLV…LGLF), and 107–127 (ALLY…ACAL).

It belongs to the DoxX family.

It is found in the cell membrane. This is an uncharacterized protein from Haemophilus influenzae (strain ATCC 51907 / DSM 11121 / KW20 / Rd).